We begin with the raw amino-acid sequence, 436 residues long: Cytochrome P450 monooxygenase phqO (436 aa).

Residue Cys377 coordinates heme.

This sequence belongs to the cytochrome P450 family. Heme is required as a cofactor.

It participates in alkaloid biosynthesis. Its function is as follows. Cytochrome P450 monooxygenase; part of the gene cluster that mediates the biosynthesis of paraherquamide, a fungal indole alkaloid that belongs to a family of natural products containing a characteristic bicyclo[2.2.2]diazaoctane core. The first steps in the biosynthesis of paraherquamide is the production of the beta-methyl-proline precursor from L-isoleucine. They require oxidation of a terminally hydroxylated L-isoleucine to the corresponding aldehyde by enzymes which have still to be identified. Spontaneous cyclization and dehydration would yield the 4-methyl pyrolline-5-carboxylic acid, which is then reduced by the pyrroline-5-carboxylate reductase phqD leading to the beta-methyl-proline precursor. The next step of paraherquamide biosynthesis involves coupling of beta-methyl-proline and L-tryptophan by the bimodular NRPS phqB, to produce a monooxopiperazine intermediate. The reductase (R) domain of phqB utilizes NADPH for hydride transfer to reduce the thioester bond of the T domain-tethered linear dipeptide to a hemithioaminal intermediate, which spontaneously cleaves the C-S bond to release the aldehyde product. This compound undergoes spontaneous cyclization and dehydration to give a dienamine which is reverse prenylated at C-2 by the reverse prenyltransferase phqJ. The other prenyltransferase present in the cluster, phqI may be a redundant gene in the pathway. During biosynthetic assembly, the key step to produce the polycyclic core is catalyzed by the bifunctional reductase and intramolecular [4+2] Diels-Alderase, phqE, resulting in formation of the [2.2.2] diazaoctane intermediate preparaherquamide. Following formation of preparaherquamide, an indole 2,3-epoxidation-initiated pinacol-like rearrangement is catalyzed by the phqK FAD-dependent monooxygenase. The prenyltransferase phqA, the cytochrome P450 monooxygenase phqL, and the FAD-linked oxidoreductase phqH (or the cytochrome P450 monooxygenase phqM), are proposed to be involved in the formation of the pyran ring. The FAD-dependent monooxygenase phqK is likely responsible for generation of the spiro-oxindole, and the N-methylation is likely mediated by the phqN methyltransferase leading to the isolable natural product paraherquamide F. However, the order of these biosynthetic steps has still to be determined. In late-stage paraherquamide biosynthesis, the third P450 monooxygenase, phqO, is probably responsible for the C-14 hydroxylation, transforming paraherquamide F to paraherquamide G, and paraherquamide E to the final product paraherquamide A. The expansion from the 6-membered ring pyran (in paraherquamides F and G) to the 7-membered dioxepin ring (in paraherquamides A and E) represents a poorly understood but intriguing process that probably involves the 2-oxoglutarate-dependent dioxygenase phqC. Finally, the remaining members of the paraherquamide cluster, including phqI as well as phqM (or phqH), do not have a clearly prescribed role and appear to be redundant. The protein is Cytochrome P450 monooxygenase phqO of Penicillium fellutanum.